A 341-amino-acid polypeptide reads, in one-letter code: Serpentine receptor class beta-1 (341 aa).

Transmembrane regions (helical) follow at residues 22-42, 66-86, 102-122, 141-161, 188-208, 240-260, and 279-299; these read AQFW…IFLL, FLFA…PLFI, GQLS…GFSI, LGPL…FTVF, CWIL…ILLV, LIVS…TIFI, and GVYI…IKAL.

The protein belongs to the nematode receptor-like protein srb family.

The protein resides in the membrane. The sequence is that of Serpentine receptor class beta-1 (srb-1) from Caenorhabditis elegans.